We begin with the raw amino-acid sequence, 151 residues long: Neuroglobin (151 aa).

A Globin domain is found at 1–149; sequence MERPEPELIR…VVQAMSRGWD (149 aa). The heme b site is built by His64 and His96.

The protein belongs to the globin family. In terms of assembly, monomer. Homodimer and homotetramer; disulfide-linked. Mainly monomeric but also detected as part of homodimers and homotetramers. Interacts with 14-3-3 proteins; regulates the phosphorylation of NGB. Could interact (ferrous form) with G-alpha(i) proteins (GTP-bound form). In terms of processing, phosphorylated during hypoxia by ERK1/ERK2. Phosphorylation regulates the heme pocket hexacoordination preventing the association of His-64 with the heme metal center. Thereby, promotes the access of dioxygen and nitrite to the heme and stimulates the nitrite reductase activity. Phosphorylation during hypoxia is stabilized by 14-3-3 proteins.

It localises to the cytoplasm. It is found in the cytosol. Its subcellular location is the mitochondrion matrix. It catalyses the reaction Fe(III)-heme b-[protein] + nitric oxide + H2O = Fe(II)-heme b-[protein] + nitrite + 2 H(+). In terms of biological role, monomeric globin with a bis-histidyl six-coordinate heme-iron atom through which it can bind dioxygen, carbon monoxide and nitric oxide. Could help transport oxygen and increase its availability to the metabolically active neuronal tissues, though its low quantity in tissues as well as its high affinity for dioxygen, which may limit its oxygen-releasing ability, argue against it. The ferrous/deoxygenated form exhibits a nitrite reductase activity and it could produce nitric oxide which in turn inhibits cellular respiration in response to hypoxia. In its ferrous/deoxygenated state, it may also exhibit GDI (Guanine nucleotide Dissociation Inhibitor) activity toward heterotrimeric G-alpha proteins, thereby regulating signal transduction to facilitate neuroprotective responses in the wake of hypoxia and associated oxidative stress. This chain is Neuroglobin, found in Canis lupus familiaris (Dog).